A 1042-amino-acid chain; its full sequence is Diacylglycerol lipase-alpha (1042 aa).

Residues 1 to 22 are Cytoplasmic-facing; it reads MPGIVVFRRRWSVGSDDLVLPA. The chain crosses the membrane as a helical span at residues 23 to 43; sequence IFLFLLHTTWFVILSVVLFGL. The Extracellular segment spans residues 44-60; that stretch reads VYNPHEACSLNLVDHGR. A helical transmembrane segment spans residues 61–81; the sequence is GYLGILLSCMIAEMAIIWLSM. At 82–101 the chain is on the cytoplasmic side; that stretch reads RGGILYTEPRDSMQYVLYVR. A helical transmembrane segment spans residues 102 to 122; that stretch reads LAILVIEFIYAIVGIVWLTQY. At 123–136 the chain is on the extracellular side; it reads YTSCNDLTAKNVTL. Asparagine 133 is a glycosylation site (N-linked (GlcNAc...) asparagine). The chain crosses the membrane as a helical span at residues 137–157; it reads GMVVCNWVVILSVCITVLCVF. Residues 158–1042 lie on the Cytoplasmic side of the membrane; it reads DPTGRTFVKL…KQDELVISAR (885 aa). Catalysis depends on charge relay system residues serine 472 and aspartate 524. Phosphoserine occurs at positions 727, 729, 732, 743, 782, 784, 806, 808, 833, 847, and 952. The segment at 846-903 is disordered; that stretch reads LSKHSQDTQPLEAALGSGGVTPERPPSAAANDEEEEVGGGGGGPASRGELALHNGRLG. Residues 1014–1042 form a disordered region; sequence LAADKIRTSTPTGHGASPAKQDELVISAR. A Phosphothreonine modification is found at threonine 1023.

It belongs to the AB hydrolase superfamily. Lipase family. As to quaternary structure, interacts (via C-terminal) with CAMK2A; leading to the phosphorylation and inhibition of DAGLA enzymatic activity. Interacts (via PPXXF motif) with HOMER1 and HOMER2; this interaction is required for DAGLA membrane localization. The cofactor is Ca(2+). Post-translationally, phosphorylated at Ser-782 and Ser-808 by CAMK2A; phosphorylation by CAMK2A inhibits diacylglycerol lipase activity. As to expression, highly expressed in brain and pancreas.

It localises to the cell membrane. The protein localises to the postsynaptic density membrane. The protein resides in the early endosome membrane. It is found in the cell projection. Its subcellular location is the dendritic spine membrane. The catalysed reaction is a 1,2-diacyl-sn-glycerol + H2O = a 2-acylglycerol + a fatty acid + H(+). The enzyme catalyses 1-octadecanoyl-2-(5Z,8Z,11Z,14Z-eicosatetraenoyl)-sn-glycerol + H2O = 2-(5Z,8Z,11Z,14Z-eicosatetraenoyl)-glycerol + octadecanoate + H(+). It carries out the reaction 1,2-di-(9Z-octadecenoyl)-sn-glycerol + H2O = 2-(9Z-octadecenoyl)-glycerol + (9Z)-octadecenoate + H(+). It catalyses the reaction 1-(9Z-octadecenoyl)-2-(5Z,8Z,11Z,14Z-eicosatetraenoyl)-sn-glycerol + H2O = 2-(5Z,8Z,11Z,14Z-eicosatetraenoyl)-glycerol + (9Z)-octadecenoate + H(+). The catalysed reaction is 1-(9Z-octadecenoyl)-2-octadecanoyl-sn-glycerol + H2O = 2-octadecanoylglycerol + (9Z)-octadecenoate + H(+). The enzyme catalyses 1-(9Z-octadecenoyl)-2-(9Z,12Z-octadecadienoyl)-sn-glycerol + H2O = 2-(9Z,12Z-octadecadienoyl)-glycerol + (9Z)-octadecenoate + H(+). It carries out the reaction 1-(9Z-octadecenoyl)-2-O-(5Z,8Z,11Z,14Z-eicosatetraenyl)-sn-glycerol + H2O = 2-O-(5Z,8Z,11Z,14Z)-eicosatetraenylglycerol + (9Z)-octadecenoate + H(+). Inhibited by 1,2,3-triazole urea covalent inhibitors KT172, DH376 and DO34. Inhibited by p-hydroxy-mercuri-benzoate and HgCl(2), but not to PMSF. Also inhibited by RHC80267. Diacylglycerol lipase activity is inhibited by the phosphorylation of Ser-782 and Ser-808 by CAMK2A. Serine hydrolase that hydrolyzes arachidonic acid-esterified diacylglycerols (DAGs) to produce the principal endocannabinoid, 2-arachidonoylglycerol (2-AG). Preferentially hydrolyzes sn-1 fatty acids from diacylglycerols (DAG) that contain arachidonic acid (AA) esterified at the sn-2 position to biosynthesize 2-AG. Has negligible activity against other lipids including monoacylglycerols and phospholipids. Plays a key role in regulating 2-AG signaling in the central nervous system (CNS). Regulates 2-AG involved in retrograde suppression at central synapses. Supports axonal growth during development and adult neurogenesis. Plays a role for eCB signaling in the physiological regulation of anxiety and depressive behaviors. Also regulates neuroinflammatory responses in the brain, in particular, LPS-induced microglial activation. The protein is Diacylglycerol lipase-alpha (DAGLA) of Homo sapiens (Human).